The following is a 173-amino-acid chain: FMN reductase (NADH) RutF 2 (173 aa).

It belongs to the non-flavoprotein flavin reductase family. RutF subfamily.

It catalyses the reaction FMNH2 + NAD(+) = FMN + NADH + 2 H(+). Catalyzes the reduction of FMN to FMNH2 which is used to reduce pyrimidine by RutA via the Rut pathway. This chain is FMN reductase (NADH) RutF 2, found in Rhizobium rhizogenes (strain K84 / ATCC BAA-868) (Agrobacterium radiobacter).